The following is a 450-amino-acid chain: Glucose-6-phosphate isomerase (450 aa).

The Proton donor role is filled by E291. Catalysis depends on residues H312 and K426.

It belongs to the GPI family.

It localises to the cytoplasm. The enzyme catalyses alpha-D-glucose 6-phosphate = beta-D-fructose 6-phosphate. The protein operates within carbohydrate biosynthesis; gluconeogenesis. It participates in carbohydrate degradation; glycolysis; D-glyceraldehyde 3-phosphate and glycerone phosphate from D-glucose: step 2/4. In terms of biological role, catalyzes the reversible isomerization of glucose-6-phosphate to fructose-6-phosphate. This is Glucose-6-phosphate isomerase from Clostridium botulinum (strain Hall / ATCC 3502 / NCTC 13319 / Type A).